Reading from the N-terminus, the 193-residue chain is Cell wall galactomannoprotein (193 aa).

Residues methionine 1–alanine 17 form the signal peptide. Asparagine 38 and asparagine 173 each carry an N-linked (GlcNAc...) asparagine glycan.

It belongs to the cell wall mannoprotein 1 family. Galactomannoprotein, glycosylated.

It is found in the secreted. The protein resides in the cell wall. Its function is as follows. Constitutive protein of the cell wall. The sequence is that of Cell wall galactomannoprotein from Armillaria ostoyae (Armillaria root rot fungus).